Consider the following 89-residue polypeptide: Small ribosomal subunit protein uS14 (89 aa).

It belongs to the universal ribosomal protein uS14 family. Part of the 30S ribosomal subunit. Contacts proteins S3 and S10.

Functionally, binds 16S rRNA, required for the assembly of 30S particles and may also be responsible for determining the conformation of the 16S rRNA at the A site. In Chlorobium chlorochromatii (strain CaD3), this protein is Small ribosomal subunit protein uS14.